The chain runs to 351 residues: Divinyl chlorophyll a/b light-harvesting protein PcbC (351 aa).

The next 6 helical transmembrane spans lie at 27-47 (FIGSHIGHTGLICFAAGGSTL), 81-101 (GVWTGAGVATIAIFHLIFSAV), 140-160 (FILGHHLIFFGVANIWFVEWA), 202-222 (VMSGHAFLAFVQISGGAWHIA), 242-262 (AVLSWSLAGIGWMAIVAAFWC), and 309-329 (LSNVHYYFGFFFIQGHIWHAL).

The protein belongs to the PsbB/PsbC family. IsiA/Pcb subfamily. The antenna complex consists of divinyl chlorophylls (a and b) and divinyl chlorophyll a/b binding proteins and binds more divinyl chlorophyll b than does the antenna complex from high-light-adapted Prochlorococcus. Requires divinyl chlorophyll a as cofactor. Divinyl chlorophyll b is required as a cofactor.

It is found in the cellular thylakoid membrane. In terms of biological role, the antenna complex functions as a light receptor, it captures and delivers excitation energy to photosystems II and I. The Prochlorales pcb genes are not related to higher plant LHCs. In Prochlorococcus marinus (strain NATL2A), this protein is Divinyl chlorophyll a/b light-harvesting protein PcbC (pcbC).